A 183-amino-acid polypeptide reads, in one-letter code: Translation initiation factor IF-3 (183 aa).

Belongs to the IF-3 family. In terms of assembly, monomer.

The protein resides in the cytoplasm. In terms of biological role, IF-3 binds to the 30S ribosomal subunit and shifts the equilibrium between 70S ribosomes and their 50S and 30S subunits in favor of the free subunits, thus enhancing the availability of 30S subunits on which protein synthesis initiation begins. The protein is Translation initiation factor IF-3 of Yersinia enterocolitica serotype O:8 / biotype 1B (strain NCTC 13174 / 8081).